Here is a 664-residue protein sequence, read N- to C-terminus: Methionine--tRNA ligase (664 aa).

The 'HIGH' region signature appears at 13–23 (PYTNGPCHLGH). Zn(2+) is bound by residues Cys144, Cys147, Cys156, and Cys160. Positions 327 to 331 (KFSKS) match the 'KMSKS' region motif. ATP is bound at residue Lys330. In terms of domain architecture, tRNA-binding spans 566 to 664 (EFAKVEMKTG…TPVPSGTKIR (99 aa)).

The protein belongs to the class-I aminoacyl-tRNA synthetase family. MetG type 1 subfamily. As to quaternary structure, homodimer. Requires Zn(2+) as cofactor.

The protein resides in the cytoplasm. It carries out the reaction tRNA(Met) + L-methionine + ATP = L-methionyl-tRNA(Met) + AMP + diphosphate. Is required not only for elongation of protein synthesis but also for the initiation of all mRNA translation through initiator tRNA(fMet) aminoacylation. The polypeptide is Methionine--tRNA ligase (Methanospirillum hungatei JF-1 (strain ATCC 27890 / DSM 864 / NBRC 100397 / JF-1)).